Consider the following 340-residue polypeptide: Protein phosphatase PTC7 homolog fig (340 aa).

The region spanning Arg-58 to Val-314 is the PPM-type phosphatase domain. Mn(2+) is bound by residues Asp-90, Gly-91, and Asp-236.

It belongs to the PP2C family. It depends on Mg(2+) as a cofactor. Mn(2+) serves as cofactor.

It carries out the reaction O-phospho-L-seryl-[protein] + H2O = L-seryl-[protein] + phosphate. The enzyme catalyses O-phospho-L-threonyl-[protein] + H2O = L-threonyl-[protein] + phosphate. The protein is Protein phosphatase PTC7 homolog fig of Drosophila pseudoobscura pseudoobscura (Fruit fly).